The chain runs to 193 residues: Xanthine phosphoribosyltransferase (193 aa).

Residues Leu20 and Asn27 each contribute to the xanthine site. A 5-phospho-alpha-D-ribose 1-diphosphate-binding site is contributed by 128 to 132 (ANGDA). Residue Lys156 coordinates xanthine.

Belongs to the purine/pyrimidine phosphoribosyltransferase family. Xpt subfamily. As to quaternary structure, homodimer.

It is found in the cytoplasm. The enzyme catalyses XMP + diphosphate = xanthine + 5-phospho-alpha-D-ribose 1-diphosphate. It functions in the pathway purine metabolism; XMP biosynthesis via salvage pathway; XMP from xanthine: step 1/1. In terms of biological role, converts the preformed base xanthine, a product of nucleic acid breakdown, to xanthosine 5'-monophosphate (XMP), so it can be reused for RNA or DNA synthesis. In Staphylococcus haemolyticus (strain JCSC1435), this protein is Xanthine phosphoribosyltransferase.